The following is a 268-amino-acid chain: Phosphatidylglycerol--prolipoprotein diacylglyceryl transferase (268 aa).

4 helical membrane passes run 14–34 (LGPI…FAGW), 57–77 (LTFY…IIFY), 90–110 (FFLW…LIAF), and 117–137 (IGAN…IGLG). Arg-140 is a binding site for a 1,2-diacyl-sn-glycero-3-phospho-(1'-sn-glycerol). 3 helical membrane-spanning segments follow: residues 174–194 (QLFE…LVTI), 200–220 (YLVL…CEFF), and 238–258 (GQIL…AVFI).

Belongs to the Lgt family.

The protein resides in the cell inner membrane. The enzyme catalyses L-cysteinyl-[prolipoprotein] + a 1,2-diacyl-sn-glycero-3-phospho-(1'-sn-glycerol) = an S-1,2-diacyl-sn-glyceryl-L-cysteinyl-[prolipoprotein] + sn-glycerol 1-phosphate + H(+). The protein operates within protein modification; lipoprotein biosynthesis (diacylglyceryl transfer). Functionally, catalyzes the transfer of the diacylglyceryl group from phosphatidylglycerol to the sulfhydryl group of the N-terminal cysteine of a prolipoprotein, the first step in the formation of mature lipoproteins. In Francisella tularensis subsp. mediasiatica (strain FSC147), this protein is Phosphatidylglycerol--prolipoprotein diacylglyceryl transferase.